We begin with the raw amino-acid sequence, 885 residues long: Protein transport protein SEC24-1 (885 aa).

4 residues coordinate Zn(2+): Cys164, Cys167, Cys186, and Cys189. The zinc finger-like stretch occupies residues 164–189 (CRRCRSYLNPFVAFIEQGRRWQCNIC). The interval 296 to 332 (DDYEESDDDDDEDDDDEEEDNEEEEEEEEDEEDDDDS) is disordered.

This sequence belongs to the SEC23/SEC24 family. SEC24 subfamily. In terms of assembly, the COPII coat is composed of at least 5 proteins: the SEC23/24 complex, the SEC13/31 complex, and the protein SAR1. Golgi apparatus membrane; Peripheral membrane protein; Cytoplasmic side.

Its subcellular location is the cytoplasm. The protein localises to the cytoplasmic vesicle. The protein resides in the COPII-coated vesicle membrane. It localises to the endoplasmic reticulum membrane. It is found in the golgi apparatus membrane. Its function is as follows. Component of the coat protein complex II (COPII) which promotes the formation of transport vesicles from the endoplasmic reticulum (ER). The coat has two main functions, the physical deformation of the endoplasmic reticulum membrane into vesicles and the selection of cargo molecules. This is Protein transport protein SEC24-1 (SEC241) from Saccharomyces uvarum (strain ATCC 76518 / CBS 7001 / CLIB 283 / NBRC 10550 / MCYC 623 / NCYC 2669 / NRRL Y-11845) (Yeast).